Reading from the N-terminus, the 128-residue chain is Large ribosomal subunit protein uL22 (128 aa).

The protein belongs to the universal ribosomal protein uL22 family. Part of the 50S ribosomal subunit.

In terms of biological role, this protein binds specifically to 23S rRNA; its binding is stimulated by other ribosomal proteins, e.g. L4, L17, and L20. It is important during the early stages of 50S assembly. It makes multiple contacts with different domains of the 23S rRNA in the assembled 50S subunit and ribosome. The globular domain of the protein is located near the polypeptide exit tunnel on the outside of the subunit, while an extended beta-hairpin is found that lines the wall of the exit tunnel in the center of the 70S ribosome. This chain is Large ribosomal subunit protein uL22, found in Prochlorococcus marinus (strain MIT 9312).